The following is a 73-amino-acid chain: UPF0337 protein lp_1708 (73 aa).

Basic and acidic residues-rich tracts occupy residues 1–35 and 44–73; these read MSDVNKKFDSKKDQLSGKAKEVEGKVTGDRAREAQ and KAKDKLADAEETVKGVVDEAKDKMKKKSDD. Residues 1–73 form a disordered region; it reads MSDVNKKFDS…KDKMKKKSDD (73 aa).

Belongs to the UPF0337 (CsbD) family.

In Lactiplantibacillus plantarum (strain ATCC BAA-793 / NCIMB 8826 / WCFS1) (Lactobacillus plantarum), this protein is UPF0337 protein lp_1708.